A 1412-amino-acid chain; its full sequence is DNA-directed RNA polymerase subunit beta' (1412 aa).

4 residues coordinate Zn(2+): C70, C72, C85, and C88. Mg(2+) is bound by residues D460, D462, and D464. Positions 814, 888, 895, and 898 each coordinate Zn(2+). The disordered stretch occupies residues 1378–1412 (EREAARQLANPFEDAPVTVDADAPQSDAGQEGSAE).

The protein belongs to the RNA polymerase beta' chain family. The RNAP catalytic core consists of 2 alpha, 1 beta, 1 beta' and 1 omega subunit. When a sigma factor is associated with the core the holoenzyme is formed, which can initiate transcription. Mg(2+) is required as a cofactor. Zn(2+) serves as cofactor.

The catalysed reaction is RNA(n) + a ribonucleoside 5'-triphosphate = RNA(n+1) + diphosphate. Its function is as follows. DNA-dependent RNA polymerase catalyzes the transcription of DNA into RNA using the four ribonucleoside triphosphates as substrates. This Bordetella petrii (strain ATCC BAA-461 / DSM 12804 / CCUG 43448) protein is DNA-directed RNA polymerase subunit beta'.